Reading from the N-terminus, the 591-residue chain is Transcriptional regulator PUL4 (591 aa).

A DNA-binding region (zn(2)-C6 fungal-type) is located at residues 3–29; the sequence is CLECKKRKQKCDGQKPCRRCTKLNVKC.

It is found in the nucleus. Transcription factor involved in regulation of the PUL gene cluster that mediates the formation of pulcherrimin, a red iron-containing pigment composed of two cyclized and modified leucine molecules that acts as a siderophore, a chelator that binds iron outside the cell for subsequent uptake. This Kluyveromyces lactis (strain ATCC 8585 / CBS 2359 / DSM 70799 / NBRC 1267 / NRRL Y-1140 / WM37) (Yeast) protein is Transcriptional regulator PUL4.